The chain runs to 1666 residues: Complement C3 (1666 aa).

The signal sequence occupies residues 1-22 (MGPAAGPSLLLLLLASVSLALG). Phosphoserine is present on residues S70, S296, and S302. 13 disulfides stabilise this stretch: C557-C821, C630-C666, C698-C725, C699-C732, C712-C733, C878-C1517, C1106-C1163, C1363-C1493, C1394-C1462, C1510-C1515, C1522-C1593, C1540-C1664, and C1640-C1649. A Phosphoserine modification is found at S676. The region spanning 698-733 (CCEDGMRENPMQFSCQRRARYVSLGEACVKAFLDCC) is the Anaphylatoxin-like domain. The N-linked (GlcNAc...) asparagine glycan is linked to N944. S973 carries the phosphoserine modification. Residues 1015-1018 (CGEQ) constitute a cross-link (isoglutamyl cysteine thioester (Cys-Gln)). Phosphoserine is present on S1326. Residues 1522-1664 (CFIQLPEKIT…FTENMVVFGC (143 aa)) enclose the NTR domain. A Phosphoserine modification is found at S1576. Residue N1620 is glycosylated (N-linked (GlcNAc...) asparagine). The segment at 1637 to 1662 (AEECQDEENQQQCQDLGTFTENMVVF) is interaction with CFP/properdin.

In terms of assembly, in absence of complement activation, the C3 precursor is first processed by the removal of 4 Arg residues, forming two chains, beta and alpha, linked by a disulfide bond. Complement C3b is composed of complement C3b and complement C3 beta chains that are associated via disulfide bonds. Non-enzymatic component of the C5 convertase, also named C4bC2bC3b, composed of the serine protease complement C2b (C2), complement C3b, as well as complement C4b (C4). Non-enzymatic component of the C5 convertase of the alternative complement pathways composed of the serine protease complement CFB and complement C3b. Interacts with CFP; interaction takes place together with CFB in the alternative complement system and allows the complex to become active. Interacts with CR1 (via Sushi 8 and Sushi 9 domains). Interacts with CFH. As to quaternary structure, interacts with CFH. Interacts with CR2. In terms of assembly, during pregnancy, C3dg exists as a complex (probably a 2:2:2 heterohexamer) with AGT and the proform of PRG2. Interacts with CR2 (via the N-terminal Sushi domains 1 and 2). C3 precursor is first processed by the removal of 4 Arg residues, forming two chains, beta and alpha, linked by a disulfide bond. During activation of the complement systems, the alpha chain is cleaved into C3a and C3b by the C3 convertase: C3b stays linked to the beta chain, while C3a is released in the plasma. The alpha chain is cleaved by the serine protease complement C2b component of the C3 convertase to generate C3a and C3b following activation by the classical, lectin and GZMK complement systems. The alpha chain is cleaved by CFB component of the C3 convertase to generate C3a and C3b following activation by the alternative complement system. In terms of processing, C3a is further processed by carboxypeptidases to release the C-terminal arginine residue generating the acylation stimulating protein (ASP). Levels of ASP are increased in adipocytes in the postprandial period and by insulin and dietary chylomicrons. Post-translationally, complement C3b is rapidly split in two positions by factor I (CFI) and a cofactor (CFH) to form iC3b (inactivated C3b) and C3f which is released. CFI and CFH catalyze proteolytic degradation of already-deposited complement C3b. Then iC3b is slowly cleaved (possibly by CFI) to form C3c (beta chain + alpha' chain fragment 1 + alpha' chain fragment 2), C3dg and C3f. Other proteases produce other fragments such as C3d or C3g. Upon activation, the internal thioester bond reacts with carbohydrate antigens on the target surface to form amide or ester bonds, leading to covalent association with the surface of pathogens. In terms of processing, complement C3b interacts with complement C4b via a thioester linkage. Post-translationally, phosphorylated by FAM20C in the extracellular medium.

The protein resides in the secreted. It localises to the cell surface. Complement activation is inhibited by VSIG4. Its function is as follows. Precursor of non-enzymatic components of the classical, alternative, lectin and GZMK complement pathways, which consist in a cascade of proteins that leads to phagocytosis and breakdown of pathogens and signaling that strengthens the adaptive immune system. In terms of biological role, non-enzymatic component of C5 convertase. Generated following cleavage by C3 convertase, it covalently attaches to the surface of pathogens, where it acts as an opsonin that marks the surface of antigens for removal. Complement C3b binds covalently via its reactive thioester, to cell surface carbohydrates or immune aggregates. Together with complement C4b, it then recruits the serine protease complement C2b to form the C5 convertase, which cleaves and activate C5, the next component of the complement pathways. In the alternative complement pathway, recruits the serine protease CFB to form the C5 convertase that cleaves and activates C5. Functionally, mediator of local inflammatory process released following cleavage by C3 convertase. Acts by binding to its receptor, C3AR1, activating G protein-coupled receptor signaling, promoting the phosphorylation, ARRB2-mediated internalization and endocytosis of C3AR1. C3a anaphylatoxin stimulates the activation of immune cells such as mast cells and basophilic leukocytes to release inflammation agents, such as cytokines, chemokines and histamine, which promote inflammation development. Also acts as potent chemoattractant for the migration of macrophages and neutrophils to the inflamed tissues, resulting in neutralization of the inflammatory triggers by multiple ways, such as phagocytosis and generation of reactive oxidants. Adipogenic hormone that stimulates triglyceride synthesis and glucose transport in adipocytes, regulating fat storage and playing a role in postprandial triglyceride clearance. Appears to stimulate triglyceride synthesis via activation of the PLC, MAPK and AKT signaling pathways. Acts by binding to its receptor, C5AR2, activating G protein-coupled receptor signaling, promoting the phosphorylation, ARRB2-mediated internalization and endocytosis of C5AR2. Its function is as follows. Acts as a chemoattractant for neutrophils in chronic inflammation. The sequence is that of Complement C3 from Cavia porcellus (Guinea pig).